The chain runs to 448 residues: Proton extrusion protein PxcA (448 aa).

4 helical membrane-spanning segments follow: residues 231-251 (ILLL…FFLI), 323-343 (IDSI…VLVL), 372-392 (LIIL…WEVI), and 408-428 (FNFL…KYWI).

This sequence belongs to the CemA family.

It localises to the cell inner membrane. Its function is as follows. Required for H(+) efflux immediately after light irradiation to form a rapid H(+) concentration gradient across the thylakoid membranes. Together with PxcL, contributes to transient H(+) uptake following dark to light transition. The sequence is that of Proton extrusion protein PxcA from Rippkaea orientalis (strain PCC 8801 / RF-1) (Cyanothece sp. (strain PCC 8801)).